A 273-amino-acid polypeptide reads, in one-letter code: Undecaprenyl-diphosphatase (273 aa).

Helical transmembrane passes span Ser6–Ser26, Ala45–Trp65, Leu90–His110, Leu116–Ala136, Tyr190–Leu210, Ala222–Ile242, and Ile252–Phe272.

It belongs to the UppP family.

Its subcellular location is the cell inner membrane. The enzyme catalyses di-trans,octa-cis-undecaprenyl diphosphate + H2O = di-trans,octa-cis-undecaprenyl phosphate + phosphate + H(+). In terms of biological role, catalyzes the dephosphorylation of undecaprenyl diphosphate (UPP). Confers resistance to bacitracin. This chain is Undecaprenyl-diphosphatase, found in Salmonella arizonae (strain ATCC BAA-731 / CDC346-86 / RSK2980).